A 419-amino-acid polypeptide reads, in one-letter code: Gamma-glutamyl phosphate reductase (419 aa).

It belongs to the gamma-glutamyl phosphate reductase family.

The protein resides in the cytoplasm. It carries out the reaction L-glutamate 5-semialdehyde + phosphate + NADP(+) = L-glutamyl 5-phosphate + NADPH + H(+). It functions in the pathway amino-acid biosynthesis; L-proline biosynthesis; L-glutamate 5-semialdehyde from L-glutamate: step 2/2. In terms of biological role, catalyzes the NADPH-dependent reduction of L-glutamate 5-phosphate into L-glutamate 5-semialdehyde and phosphate. The product spontaneously undergoes cyclization to form 1-pyrroline-5-carboxylate. The chain is Gamma-glutamyl phosphate reductase from Ruthia magnifica subsp. Calyptogena magnifica.